The chain runs to 350 residues: MAAQIWYEDDGDLSVLDGKKVAIIGYGSQGHAHALNLRDSGVDVVVGLRPNSKSVEFAKEQGLEVKSVPEAAAEADVIMILAPDQYQKGIWENDIEPNIKPGAALAFAHGFNIHYGYIKPSEDHPVFMVAPKGPGHIVRREYVAGRGVPVVTAVEQDPRGDGWDLALAYAKALGALRAGAIKTTFKEETETDLFGEQNVLLGGVNKLVEMGFEVLTDAGYQPEIAYFEVCHELKMIVDLMNEGGLNKDRWSCSDTAQYGDYVSTVIDEHTRERMQYHLQRIQDGSFAKEFMDDQAAGAPKFKQLQEEYSNVRIEEVGPKLRAMFSWNNDAAKDADEANSFTGKIARAQVQ.

A KARI N-terminal Rossmann domain is found at 3–183; it reads AQIWYEDDGD…GALRAGAIKT (181 aa). NADP(+) is bound by residues 26–29, R49, S52, S54, and 84–87; these read YGSQ and DQYQ. Residue H109 is part of the active site. G135 contributes to the NADP(+) binding site. The KARI C-terminal knotted domain occupies 184–327; it reads TFKEETETDL…PKLRAMFSWN (144 aa). Residues D192, E196, E228, and E232 each coordinate Mg(2+). S253 contacts substrate.

The protein belongs to the ketol-acid reductoisomerase family. It depends on Mg(2+) as a cofactor.

The catalysed reaction is (2R)-2,3-dihydroxy-3-methylbutanoate + NADP(+) = (2S)-2-acetolactate + NADPH + H(+). It catalyses the reaction (2R,3R)-2,3-dihydroxy-3-methylpentanoate + NADP(+) = (S)-2-ethyl-2-hydroxy-3-oxobutanoate + NADPH + H(+). The protein operates within amino-acid biosynthesis; L-isoleucine biosynthesis; L-isoleucine from 2-oxobutanoate: step 2/4. It functions in the pathway amino-acid biosynthesis; L-valine biosynthesis; L-valine from pyruvate: step 2/4. In terms of biological role, involved in the biosynthesis of branched-chain amino acids (BCAA). Catalyzes an alkyl-migration followed by a ketol-acid reduction of (S)-2-acetolactate (S2AL) to yield (R)-2,3-dihydroxy-isovalerate. In the isomerase reaction, S2AL is rearranged via a Mg-dependent methyl migration to produce 3-hydroxy-3-methyl-2-ketobutyrate (HMKB). In the reductase reaction, this 2-ketoacid undergoes a metal-dependent reduction by NADPH to yield (R)-2,3-dihydroxy-isovalerate. The sequence is that of Ketol-acid reductoisomerase (NADP(+)) from Bifidobacterium animalis subsp. lactis (strain AD011).